Here is a 201-residue protein sequence, read N- to C-terminus: MSRYRGPRFKKIRRLGALPGLTSKRPKAGSDLRNQSRSVKKSQYRIRLEEKQKLRFHYGLTERQLLKYVRIAGKAKGSTGQVLLQLLEMRLDNILFRLGMALTIPQARQLVNHGHILVNGRIVDIPSYRCKPRDIITVKDDQNSRTLVQNLLDSSAPEELPNHLTLHTFQYEGLVNQIIDRKCVGLKINELLVVEYYSRQT.

In terms of domain architecture, S4 RNA-binding spans 89–152 (MRLDNILFRL…NSRTLVQNLL (64 aa)).

It belongs to the universal ribosomal protein uS4 family. In terms of assembly, part of the 30S ribosomal subunit. Contacts protein S5. The interaction surface between S4 and S5 is involved in control of translational fidelity.

The protein resides in the plastid. The protein localises to the chloroplast. In terms of biological role, one of the primary rRNA binding proteins, it binds directly to 16S rRNA where it nucleates assembly of the body of the 30S subunit. Functionally, with S5 and S12 plays an important role in translational accuracy. The sequence is that of Small ribosomal subunit protein uS4c (rps4) from Olimarabidopsis pumila (Dwarf rocket).